A 182-amino-acid chain; its full sequence is Isopentenyl-diphosphate Delta-isomerase (182 aa).

Mn(2+)-binding residues include histidine 25 and histidine 32. Residues 30–164 form the Nudix hydrolase domain; that stretch reads PLHLAFSCWL…PWAFSPWMVM (135 aa). Cysteine 67 is an active-site residue. Histidine 69 is a binding site for Mn(2+). A Mg(2+)-binding site is contributed by glutamate 87. Mn(2+) is bound by residues glutamate 114 and glutamate 116. Residue glutamate 116 is part of the active site.

This sequence belongs to the IPP isomerase type 1 family. As to quaternary structure, homodimer. Mg(2+) serves as cofactor. It depends on Mn(2+) as a cofactor.

The protein localises to the cytoplasm. The catalysed reaction is isopentenyl diphosphate = dimethylallyl diphosphate. It functions in the pathway isoprenoid biosynthesis; dimethylallyl diphosphate biosynthesis; dimethylallyl diphosphate from isopentenyl diphosphate: step 1/1. Catalyzes the 1,3-allylic rearrangement of the homoallylic substrate isopentenyl (IPP) to its highly electrophilic allylic isomer, dimethylallyl diphosphate (DMAPP). The protein is Isopentenyl-diphosphate Delta-isomerase of Salmonella arizonae (strain ATCC BAA-731 / CDC346-86 / RSK2980).